The sequence spans 218 residues: 7-cyano-7-deazaguanine synthase (218 aa).

Residue 11 to 21 (LSGGMDSATLL) coordinates ATP. 4 residues coordinate Zn(2+): cysteine 193, cysteine 201, cysteine 204, and cysteine 207.

Belongs to the QueC family. It depends on Zn(2+) as a cofactor.

The enzyme catalyses 7-carboxy-7-deazaguanine + NH4(+) + ATP = 7-cyano-7-deazaguanine + ADP + phosphate + H2O + H(+). Its pathway is purine metabolism; 7-cyano-7-deazaguanine biosynthesis. In terms of biological role, catalyzes the ATP-dependent conversion of 7-carboxy-7-deazaguanine (CDG) to 7-cyano-7-deazaguanine (preQ(0)). This chain is 7-cyano-7-deazaguanine synthase, found in Aquifex aeolicus (strain VF5).